Here is a 114-residue protein sequence, read N- to C-terminus: uncharacterized protein (114 aa).

The signal sequence occupies residues 1–19; the sequence is MKASYLVLIFISIFSMAQA. A Phosphoserine modification is found at S41.

This sequence belongs to the protease inhibitor I9 family.

This is an uncharacterized protein from Saccharomyces cerevisiae (strain ATCC 204508 / S288c) (Baker's yeast).